Reading from the N-terminus, the 856-residue chain is Glucans biosynthesis glucosyltransferase H (856 aa).

Transmembrane regions (helical) follow at residues 144–164, 198–218, 517–537, 574–594, 608–628, and 684–704; these read ILLV…KGIM, ILIL…TALM, VFLT…FLVL, LFST…ILIW, TLSM…RMIF, and FLWW…VSVI.

It belongs to the glycosyltransferase 2 family. OpgH subfamily.

It localises to the cell inner membrane. The protein operates within glycan metabolism; osmoregulated periplasmic glucan (OPG) biosynthesis. Its function is as follows. Involved in the biosynthesis of osmoregulated periplasmic glucans (OPGs). In Pseudomonas fluorescens (strain ATCC BAA-477 / NRRL B-23932 / Pf-5), this protein is Glucans biosynthesis glucosyltransferase H.